The sequence spans 285 residues: Aspartate/glutamate leucyltransferase (285 aa).

This sequence belongs to the R-transferase family. Bpt subfamily.

It localises to the cytoplasm. It catalyses the reaction N-terminal L-glutamyl-[protein] + L-leucyl-tRNA(Leu) = N-terminal L-leucyl-L-glutamyl-[protein] + tRNA(Leu) + H(+). The catalysed reaction is N-terminal L-aspartyl-[protein] + L-leucyl-tRNA(Leu) = N-terminal L-leucyl-L-aspartyl-[protein] + tRNA(Leu) + H(+). Functions in the N-end rule pathway of protein degradation where it conjugates Leu from its aminoacyl-tRNA to the N-termini of proteins containing an N-terminal aspartate or glutamate. The polypeptide is Aspartate/glutamate leucyltransferase (Dinoroseobacter shibae (strain DSM 16493 / NCIMB 14021 / DFL 12)).